Reading from the N-terminus, the 533-residue chain is Probable DNA ligase (533 aa).

Glutamate 211 serves as a coordination point for ATP. The active-site N6-AMP-lysine intermediate is lysine 213. ATP contacts are provided by arginine 218, arginine 233, glutamate 262, phenylalanine 302, arginine 374, and lysine 380. Residues 512–533 are disordered; it reads LAGEAAEKGQAEGGGEELEDDG.

It belongs to the ATP-dependent DNA ligase family. Requires Mg(2+) as cofactor.

It catalyses the reaction ATP + (deoxyribonucleotide)n-3'-hydroxyl + 5'-phospho-(deoxyribonucleotide)m = (deoxyribonucleotide)n+m + AMP + diphosphate.. DNA ligase that seals nicks in double-stranded DNA during DNA replication, DNA recombination and DNA repair. This is Probable DNA ligase from Sorangium cellulosum (strain So ce56) (Polyangium cellulosum (strain So ce56)).